The chain runs to 134 residues: Transmembrane protein 100 (134 aa).

The disordered stretch occupies residues 1–24 (MTEEPTKENLGGPKSPTPVTMEKS). A Phosphoserine modification is found at Ser15. The next 2 helical transmembrane spans lie at 56-76 (CIIP…AVAY) and 84-104 (VISI…ASSA). The residue at position 121 (Ser121) is a Phosphoserine.

As to quaternary structure, interacts (via C-terminus) with TRPA1 and TRPV1. Interacts with TASOR.

Its subcellular location is the cell membrane. It localises to the membrane. It is found in the perikaryon. The protein resides in the cytoplasm. The protein localises to the perinuclear region. Its subcellular location is the endoplasmic reticulum. Its function is as follows. Plays a role during embryonic arterial endothelium differentiation and vascular morphogenesis through the ACVRL1 receptor-dependent signaling pathway upon stimulation by bone morphogenetic proteins, such as GDF2/BMP9 and BMP10. Involved in the regulation of nociception, acting as a modulator of the interaction between TRPA1 and TRPV1, two molecular sensors and mediators of pain signals in dorsal root ganglia (DRG) neurons. Mechanistically, it weakens their interaction, thereby releasing the inhibition of TRPA1 by TRPV1 and increasing the single-channel open probability of the TRPA1-TRPV1 complex. The chain is Transmembrane protein 100 (Tmem100) from Rattus norvegicus (Rat).